Here is a 108-residue protein sequence, read N- to C-terminus: Large ribosomal subunit protein uL24 (108 aa).

It belongs to the universal ribosomal protein uL24 family. As to quaternary structure, part of the 50S ribosomal subunit.

In terms of biological role, one of two assembly initiator proteins, it binds directly to the 5'-end of the 23S rRNA, where it nucleates assembly of the 50S subunit. Its function is as follows. One of the proteins that surrounds the polypeptide exit tunnel on the outside of the subunit. The chain is Large ribosomal subunit protein uL24 from Geobacter sulfurreducens (strain ATCC 51573 / DSM 12127 / PCA).